A 517-amino-acid chain; its full sequence is Crotonobetaine/carnitine--CoA ligase (517 aa).

Belongs to the ATP-dependent AMP-binding enzyme family.

It catalyses the reaction 4-(trimethylamino)butanoate + ATP + CoA = 4-(trimethylamino)butanoyl-CoA + AMP + diphosphate. The catalysed reaction is crotonobetaine + ATP + CoA = crotonobetainyl-CoA + AMP + diphosphate. The enzyme catalyses (R)-carnitine + ATP + CoA = (R)-carnitinyl-CoA + AMP + diphosphate. Its pathway is amine and polyamine metabolism; carnitine metabolism. In terms of biological role, catalyzes the transfer of CoA to carnitine, generating the initial carnitinyl-CoA needed for the CaiB reaction cycle. Also has activity toward crotonobetaine and gamma-butyrobetaine. The chain is Crotonobetaine/carnitine--CoA ligase from Escherichia coli O1:K1 / APEC.